The chain runs to 139 residues: Large-conductance mechanosensitive channel (139 aa).

A run of 2 helical transmembrane segments spans residues 9–29 and 79–99; these read AFAV…GAAF and IQTV…VKAI.

Belongs to the MscL family. In terms of assembly, homopentamer.

The protein localises to the cell inner membrane. In terms of biological role, channel that opens in response to stretch forces in the membrane lipid bilayer. May participate in the regulation of osmotic pressure changes within the cell. The sequence is that of Large-conductance mechanosensitive channel from Pseudomonas putida (strain W619).